Here is a 363-residue protein sequence, read N- to C-terminus: Mitogen-activated protein kinase kinase 2 (363 aa).

At Ser-56 the chain carries Phosphoserine. A Protein kinase domain is found at 70 to 330 (LDMVKVIGKG…AKELMEHPFL (261 aa)). ATP contacts are provided by residues 76-84 (IGKGSSGVV) and Lys-99. Residue Asp-192 is the Proton acceptor of the active site. Phosphothreonine occurs at positions 220, 226, and 230.

The protein belongs to the protein kinase superfamily. STE Ser/Thr protein kinase family. MAP kinase kinase subfamily. In terms of assembly, interacts with MEKK1, MPK4 and MPK6. May form a ternary complex composed of MEKK1 and MKK1/MKK2 and MPK4. Interacts with MPK10 and MPK11. Interacts with MAPKKK5 mainly in the cytosol. Phosphorylation at Thr-220 and Thr-226 by MAP kinase kinase kinases positively regulates kinase activity. Phosphorylated by MEKK1 in response to cold. Phosphorylated by MAPKKK5.

It carries out the reaction L-seryl-[protein] + ATP = O-phospho-L-seryl-[protein] + ADP + H(+). The enzyme catalyses L-threonyl-[protein] + ATP = O-phospho-L-threonyl-[protein] + ADP + H(+). It catalyses the reaction L-tyrosyl-[protein] + ATP = O-phospho-L-tyrosyl-[protein] + ADP + H(+). With respect to regulation, activated in response to cold and salt stresses through serine and threonine phosphorylation by MEKK1. Its function is as follows. MEKK1, MKK1/MKK2 and MPK4 function in a signaling pathway that modulates the expression of genes responding to biotic and abiotic stresses and also plays an important role in pathogen defense by negatively regulating innate immunity. Plays a role in abiotic stress tolerance and plant disease resistance through activation of MPK4 and MPK6 by phosphorylation. Acts redundantly with MKK1. This Arabidopsis thaliana (Mouse-ear cress) protein is Mitogen-activated protein kinase kinase 2 (MKK2).